The primary structure comprises 261 residues: RING finger protein 208 (261 aa).

The disordered stretch occupies residues 83–106 (PALEGAPHTPPLPRRPRKGSSELG). Serine 102 bears the Phosphoserine mark. The segment at 143-190 (CPTCGHSYNVTQRRPRVLSCLHSVCEQCLQILYESCPKYKFISCPTCR) adopts an RING-type zinc-finger fold.

The polypeptide is RING finger protein 208 (RNF208) (Homo sapiens (Human)).